The following is a 1144-amino-acid chain: Probable translation initiation factor IF-2 (1144 aa).

The DOD-type homing endonuclease domain maps to 232–362; sequence FAGVMFGDGS…LSLLLLRFGI (131 aa). The tr-type G domain maps to 551–768; sequence TTETHNFVAN…LIAGLSQKYL (218 aa). GTP-binding positions include 624–628 and 678–681; these read DTPGH and NKID.

The protein belongs to the TRAFAC class translation factor GTPase superfamily. Classic translation factor GTPase family. IF-2 subfamily. This protein undergoes a protein self splicing that involves a post-translational excision of the intervening region (intein) followed by peptide ligation.

Function in general translation initiation by promoting the binding of the formylmethionine-tRNA to ribosomes. Seems to function along with eIF-2. This Thermococcus kodakarensis (strain ATCC BAA-918 / JCM 12380 / KOD1) (Pyrococcus kodakaraensis (strain KOD1)) protein is Probable translation initiation factor IF-2 (infB).